A 282-amino-acid polypeptide reads, in one-letter code: Protein-export membrane protein SecF (282 aa).

6 helical membrane passes run Met-16–Val-36, Gln-126–Phe-146, Ile-148–Ala-168, Phe-169–Ile-189, Gly-221–Leu-241, and Val-253–Leu-273.

The protein belongs to the SecD/SecF family. SecF subfamily. Part of the protein translocation apparatus. Forms a complex with SecD.

It localises to the cell membrane. In terms of biological role, involved in protein export. The polypeptide is Protein-export membrane protein SecF (Methanolacinia petrolearia (strain DSM 11571 / OCM 486 / SEBR 4847) (Methanoplanus petrolearius)).